A 462-amino-acid chain; its full sequence is UDP-N-acetylmuramate--L-alanine ligase (462 aa).

112–118 contributes to the ATP binding site; it reads GTHGKTT.

This sequence belongs to the MurCDEF family.

It localises to the cytoplasm. It carries out the reaction UDP-N-acetyl-alpha-D-muramate + L-alanine + ATP = UDP-N-acetyl-alpha-D-muramoyl-L-alanine + ADP + phosphate + H(+). The protein operates within cell wall biogenesis; peptidoglycan biosynthesis. In terms of biological role, cell wall formation. The protein is UDP-N-acetylmuramate--L-alanine ligase of Geobacter sulfurreducens (strain ATCC 51573 / DSM 12127 / PCA).